The primary structure comprises 376 residues: NIF3-like protein 1 (376 aa).

N6-acetyllysine is present on Lys108. The segment at 243–376 is mediates interaction with COPS2; that stretch reads LLLHTGMGRL…ETDRDPLRVV (134 aa). Thr254 bears the Phosphothreonine mark. Ser258 carries the phosphoserine modification.

Belongs to the GTP cyclohydrolase I type 2/NIF3 family. In terms of assembly, homodimer. Interacts with COPS2. Interacts with THOC7.

Its subcellular location is the cytoplasm. The protein resides in the nucleus. May function as a transcriptional corepressor through its interaction with COPS2, negatively regulating the expression of genes involved in neuronal differentiation. This Rattus norvegicus (Rat) protein is NIF3-like protein 1.